Reading from the N-terminus, the 117-residue chain is Immunoglobulin lambda variable 10-54 (117 aa).

Positions 1-21 (MPWALLLLTLLTHSAVSVVQA) are cleaved as a signal peptide. The segment at 20 to 43 (QAGLTQPPSVSKGLRQTATLTCTG) is framework-1. The Ig-like domain maps to 22–117 (GLTQPPSVSK…CSALDSSLSA (96 aa)). Cysteine 41 and cysteine 108 are disulfide-bonded. Positions 44–52 (NSNIVGNQG) are complementarity-determining-1. Residues 53 to 69 (AAWLQQHQGHPPKLLSY) are framework-2. Positions 70–72 (RNN) are complementarity-determining-2. The framework-3 stretch occupies residues 73 to 108 (NRPSGISERFSASRSGNTASLTITGLQPEDEADYYC). The tract at residues 109–117 (SALDSSLSA) is complementarity-determining-3.

In terms of assembly, immunoglobulins are composed of two identical heavy chains and two identical light chains; disulfide-linked.

It is found in the secreted. It localises to the cell membrane. Its function is as follows. V region of the variable domain of immunoglobulin light chains that participates in the antigen recognition. Immunoglobulins, also known as antibodies, are membrane-bound or secreted glycoproteins produced by B lymphocytes. In the recognition phase of humoral immunity, the membrane-bound immunoglobulins serve as receptors which, upon binding of a specific antigen, trigger the clonal expansion and differentiation of B lymphocytes into immunoglobulins-secreting plasma cells. Secreted immunoglobulins mediate the effector phase of humoral immunity, which results in the elimination of bound antigens. The antigen binding site is formed by the variable domain of one heavy chain, together with that of its associated light chain. Thus, each immunoglobulin has two antigen binding sites with remarkable affinity for a particular antigen. The variable domains are assembled by a process called V-(D)-J rearrangement and can then be subjected to somatic hypermutations which, after exposure to antigen and selection, allow affinity maturation for a particular antigen. This chain is Immunoglobulin lambda variable 10-54, found in Homo sapiens (Human).